A 535-amino-acid chain; its full sequence is Large neutral amino acids transporter small subunit 2 (535 aa).

A compositionally biased stretch (basic and acidic residues) spans 1–17; the sequence is MEEGARHRNNTEKKHPG. The disordered stretch occupies residues 1 to 30; it reads MEEGARHRNNTEKKHPGGGESDASPEAGSG. Topologically, residues 1 to 44 are cytoplasmic; sequence MEEGARHRNNTEKKHPGGGESDASPEAGSGGGGVALKKEIGLVS. At Ser-29 the chain carries Phosphoserine. Residues 45 to 65 form a helical membrane-spanning segment; that stretch reads ACGIIVGNIIGSGIFVSPKGV. Ile-53 contacts L-leucine. At 66-73 the chain is on the extracellular side; it reads LENAGSVG. A helical membrane pass occupies residues 74 to 95; it reads LALIVWIVTGFITVVGALCYAE. Residues 96–116 are Cytoplasmic-facing; it reads LGVTIPKSGGDYSYVKDIFGG. Residues 117–149 form a helical membrane-spanning segment; sequence LAGFLRLWIAVLVIYPTNQAVIALTFSNYVLQP. Position 134 (Asn-134) interacts with L-tryptophan. Over 150-157 the chain is Extracellular; that stretch reads LFPTCFPP. The helical transmembrane segment at 158 to 178 threads the bilayer; sequence ESGLRLLAAICLLLLTWVNCS. At 179 to 181 the chain is on the cytoplasmic side; sequence SVR. Residues 182–210 traverse the membrane as a helical segment; the sequence is WATRVQDIFTAGKLLALALIIIMGIVQIC. Residues 211-230 are Extracellular-facing; sequence KGEYFWLEPKNAFENFQEPD. Residues 231–252 traverse the membrane as a helical segment; it reads IGLVALAFLQGSFAYGGWNFLN. Position 246 (Gly-246) interacts with L-leucine. Over 253 to 265 the chain is Cytoplasmic; it reads YVTEELVDPYKNL. The chain crosses the membrane as a helical span at residues 266–287; sequence PRAIFISIPLVTFVYVFANVAY. Over 288–312 the chain is Extracellular; the sequence is VTAMSPQELLASNAVAVTFGEKLLG. Residues 313 to 338 form a helical membrane-spanning segment; it reads VMAWIMPISVALSTFGGVNGSLFTSS. Over 339–364 the chain is Cytoplasmic; sequence RLFFAGAREGHLPSVLAMIHVKRCTP. Residues 365–382 form a helical membrane-spanning segment; sequence IPALLFTCISTLLMLVTS. The Extracellular portion of the chain corresponds to 383-386; the sequence is DMYT. A helical transmembrane segment spans residues 387-408; that stretch reads LINYVGFINYLFYGVTVAGQIV. Asn-395 is an L-tryptophan binding site. Over 409 to 423 the chain is Cytoplasmic; it reads LRWKKPDIPRPIKIN. 2 helical membrane-spanning segments follow: residues 424 to 446 and 447 to 466; these read LLFPIIYLLFWAFLLVFSLWSEP and VVCGIGLAIMLTGVPVYFLG. Over 467 to 535 the chain is Cytoplasmic; sequence VYWQHKPKCF…DKDVAGQPQP (69 aa). The tract at residues 502–535 is disordered; it reads SGTEEANEDMEEQQQPMYQPTPTKDKDVAGQPQP. Over residues 514–523 the composition is skewed to polar residues; sequence QQQPMYQPTP.

Belongs to the amino acid-polyamine-organocation (APC) superfamily. L-type amino acid transporter (LAT) (TC 2.A.3.8) family. As to quaternary structure, disulfide-linked heterodimer composed of the catalytic light chain subunit SLC7A8 and the heavy chain subunit SLC3A2. SLC3A2 acts as chaperones for correct plasma membrane trafficking and stabilization of SLC7A8 and modulates the substrate affinity and specificity of SLC7A8. ICAM-1 associates with the heterodimer SLC3A2/SLC7A8; this interaction regulates SLC7A8 activity. As to expression, strongest expression is observed in kidney and moderate expression in placenta and brain, followed by liver, prostate, testis, ovary, lymph node, thymus, spleen, skeletal muscle and heart. Also expressed in fetal liver as well as in the retinal pigment epithelial cell line ARPE-19 and the intestinal epithelial cell line Caco-2.

Its subcellular location is the cell membrane. The protein resides in the basolateral cell membrane. It carries out the reaction L-histidine(in) + L-phenylalanine(out) = L-histidine(out) + L-phenylalanine(in). The enzyme catalyses L-tryptophan(in) + L-phenylalanine(out) = L-tryptophan(out) + L-phenylalanine(in). The catalysed reaction is L-isoleucine(in) + L-phenylalanine(out) = L-isoleucine(out) + L-phenylalanine(in). It catalyses the reaction L-valine(in) + L-phenylalanine(out) = L-valine(out) + L-phenylalanine(in). It carries out the reaction L-leucine(in) + L-phenylalanine(out) = L-leucine(out) + L-phenylalanine(in). The enzyme catalyses L-glutamine(in) + L-phenylalanine(out) = L-glutamine(out) + L-phenylalanine(in). The catalysed reaction is L-cysteine(in) + L-phenylalanine(out) = L-cysteine(out) + L-phenylalanine(in). It catalyses the reaction L-phenylalanine(out) + L-methionine(in) = L-phenylalanine(in) + L-methionine(out). It carries out the reaction L-leucine(out) + L-methionine(in) = L-leucine(in) + L-methionine(out). The enzyme catalyses L-cysteine(out) + L-methionine(in) = L-cysteine(in) + L-methionine(out). The catalysed reaction is S-methylmercury-L-cysteine(out) + L-methionine(in) = S-methylmercury-L-cysteine(in) + L-methionine(out). It catalyses the reaction S-methylmercury-L-cysteine(in) + L-leucine(out) = S-methylmercury-L-cysteine(out) + L-leucine(in). It carries out the reaction S-methylmercury-L-cysteine(in) + L-phenylalanine(out) = S-methylmercury-L-cysteine(out) + L-phenylalanine(in). The enzyme catalyses L-phenylalanine(out) + L-serine(in) = L-phenylalanine(in) + L-serine(out). The catalysed reaction is L-phenylalanine(out) + glycine(in) = L-phenylalanine(in) + glycine(out). It catalyses the reaction L-phenylalanine(out) + L-alanine(in) = L-phenylalanine(in) + L-alanine(out). It carries out the reaction 3,3'-diiodo-L-thyronine(out) = 3,3'-diiodo-L-thyronine(in). The enzyme catalyses 3,3',5-triiodo-L-thyronine(out) = 3,3',5-triiodo-L-thyronine(in). The catalysed reaction is L-dopa(out) + L-phenylalanine(in) = L-dopa(in) + L-phenylalanine(out). Its activity is regulated as follows. Inhibited by the L-type inhibitor 2-Aminobicyclo-(2,2,1)-heptane-2-carboxylic acid (BCH). Functionally, associates with SLC3A2 to form a functional heterodimeric complex that translocates small and large neutral amino acids with broad specificity and a stoichiometry of 1:1. Functions as amino acid antiporter mediating the influx of extracellular essential amino acids mainly in exchange with the efflux of highly concentrated intracellular amino acids. Has relatively symmetrical selectivities but strongly asymmetrical substrate affinities at both the intracellular and extracellular sides of the transporter. This asymmetry allows SLC7A8 to regulate intracellular amino acid pools (mM concentrations) by exchange with external amino acids (uM concentration range), equilibrating the relative concentrations of different amino acids across the plasma membrane instead of mediating their net uptake. May play an essential role in the reabsorption of neutral amino acids from the epithelial cells to the bloodstream in the kidney. Involved in the uptake of methylmercury (MeHg) when administered as the L-cysteine or D,L-homocysteine complexes, and hence plays a role in metal ion homeostasis and toxicity. Involved in the cellular activity of small molecular weight nitrosothiols, via the stereoselective transport of L-nitrosocysteine (L-CNSO) across the transmembrane. Imports the thyroid hormone diiodothyronine (T2) and to a smaller extent triiodothyronine (T3) but not rT 3 or thyroxine (T4). Mediates the uptake of L-DOPA. May participate in auditory function. The polypeptide is Large neutral amino acids transporter small subunit 2 (Homo sapiens (Human)).